Consider the following 533-residue polypeptide: Putative replication factor C large subunit (533 aa).

Over residues 1 to 11 (MSKTAKNTKTI) the composition is skewed to polar residues. The segment at 1–31 (MSKTAKNTKTIKSVKSVNKDNKPNKDNKDDK) is disordered. Basic and acidic residues predominate over residues 17-31 (VNKDNKPNKDNKDDK).

Belongs to the activator 1 large subunit family.

Functionally, part of the RFC clamp loader complex which loads the PCNA sliding clamp onto DNA. In Acanthamoeba polyphaga (Amoeba), this protein is Putative replication factor C large subunit.